The following is a 94-amino-acid chain: Conotoxin Cal22a (94 aa).

Residues 1 to 24 (MMSTKGITLFLCLLLLALATSVNG) form the signal peptide. Positions 25-44 (GQGTRRSRMTRALHGGRPSA) are excised as a propeptide.

Contains 4 disulfide bonds. As to expression, expressed by the venom duct.

It localises to the secreted. Functionally, probable neurotoxin with unknown target. Possibly targets ion channels. In Californiconus californicus (California cone), this protein is Conotoxin Cal22a.